Here is a 332-residue protein sequence, read N- to C-terminus: Probable allantoicase (332 aa).

This sequence belongs to the allantoicase family.

The enzyme catalyses allantoate + H2O = (S)-ureidoglycolate + urea. It participates in nitrogen metabolism; (S)-allantoin degradation; (S)-ureidoglycolate from allantoate (aminidohydrolase route): step 1/1. The chain is Probable allantoicase from Pseudomonas aeruginosa (strain LESB58).